We begin with the raw amino-acid sequence, 403 residues long: L-cysteine:1D-myo-inositol 2-amino-2-deoxy-alpha-D-glucopyranoside ligase (403 aa).

Zn(2+) is bound at residue Cys-43. L-cysteinyl-5'-AMP-binding positions include 43 to 46, Thr-58, 81 to 83, and Trp-223; these read CGIT and NVT. The 'HIGH' region motif lies at 45-55; the sequence is ITPYDATHLGH. Cys-227 is a Zn(2+) binding site. Residue 245-247 coordinates L-cysteinyl-5'-AMP; the sequence is GAD. His-252 contacts Zn(2+). L-cysteinyl-5'-AMP is bound at residue Val-278. A 'KMSKS' region motif is present at residues 284–288; it reads KMSKS.

The protein belongs to the class-I aminoacyl-tRNA synthetase family. MshC subfamily. In terms of assembly, monomer. The cofactor is Zn(2+).

It carries out the reaction 1D-myo-inositol 2-amino-2-deoxy-alpha-D-glucopyranoside + L-cysteine + ATP = 1D-myo-inositol 2-(L-cysteinylamino)-2-deoxy-alpha-D-glucopyranoside + AMP + diphosphate + H(+). Catalyzes the ATP-dependent condensation of GlcN-Ins and L-cysteine to form L-Cys-GlcN-Ins. The protein is L-cysteine:1D-myo-inositol 2-amino-2-deoxy-alpha-D-glucopyranoside ligase of Acidothermus cellulolyticus (strain ATCC 43068 / DSM 8971 / 11B).